The primary structure comprises 872 residues: Potassium voltage-gated channel subfamily KQT member 3 (872 aa).

Residues 1–43 are disordered; sequence MGLKARRAAGAAGGGGDGGGGGGGAANPAGGDAAAAGDEERKV. The Cytoplasmic segment spans residues 1 to 120; that stretch reads MGLKARRAAG…IYDALERPRG (120 aa). Over residues 11-25 the composition is skewed to gly residues; it reads AAGGGGDGGGGGGGA. Residues 26–36 show a composition bias toward low complexity; sequence ANPAGGDAAAA. T81 carries the phosphothreonine modification. Residues 121 to 143 form a helical membrane-spanning segment; sequence WALLYHALVFLIVLGCLILAVLT. The Extracellular segment spans residues 144–153; that stretch reads TFKEYETVSG. Residues 154 to 175 traverse the membrane as a helical segment; it reads DWLLLLETFAIFIFGAEFALRI. Residues 176–193 lie on the Cytoplasmic side of the membrane; that stretch reads WAAGCCCRYKGWRGRLKF. The helical transmembrane segment at 194 to 213 threads the bilayer; sequence ARKPLCMLDIFVLIASVPVV. Residues 214–225 are Extracellular-facing; it reads AVGNQGNVLATS. The chain crosses the membrane as a helical; Voltage-sensor span at residues 226-244; that stretch reads LRSLRFLQILRMLRMDRRG. R243 is a binding site for a 1,2-diacyl-sn-glycero-3-phospho-(1D-myo-inositol-4,5-bisphosphate). The Cytoplasmic segment spans residues 245 to 256; it reads GTWKLLGSAICA. The residue at position 246 (T246) is a Phosphothreonine. The chain crosses the membrane as a helical span at residues 257–282; sequence HSKELITAWYIGFLTLILSSFLVYLV. Position 259 (K259) interacts with a 1,2-diacyl-sn-glycero-3-phospho-(1D-myo-inositol-4,5-bisphosphate). Residues 283–302 lie on the Extracellular side of the membrane; the sequence is EKDVPEVDAQGEEMKEEFET. Residues 303–315 constitute an intramembrane region (pore-forming); it reads YADALWWGLITLA. The short motif at 316-321 is the Selectivity filter element; that stretch reads TIGYGD. Residues 316 to 326 are Extracellular-facing; that stretch reads TIGYGDKTPKT. The helical transmembrane segment at 327-353 threads the bilayer; it reads WEGRLIAATFSLIGVSFFALPAGILGS. Residues 354-872 are Cytoplasmic-facing; the sequence is GLALKVQEQH…SVWTPSNKPI (519 aa). Residues 356–537 are mediates interaction with calmodulin; the sequence is ALKVQEQHRQ…RLYKKKFKET (182 aa). K366 serves as a coordination point for a 1,2-diacyl-sn-glycero-3-phospho-(1D-myo-inositol-4,5-bisphosphate). Disordered regions lie at residues 575-611 and 764-872; these read GPPS…PSTS and ADLQ…NKPI. Polar residues-rich tracts occupy residues 587-600 and 843-872; these read KGSA…QSPR and DPFT…NKPI.

It belongs to the potassium channel family. KQT (TC 1.A.1.15) subfamily. Kv7.3/KCNQ3 sub-subfamily. Heterotetramer with KCNQ2; forms heterotetrameric native M-channel responsible for the M-current. Interacts with calmodulin; the interaction is calcium-independent, constitutive and participates in the proper assembly of a functional M-channel. Heteromultimer with KCNQ5. May associate with KCNE2. Interacts with IQCJ-SCHIP1. Interacts (via the pore module) with SLC5A3/SMIT1; forms a coregulatory complex that alters ion selectivity, voltage dependence and gating kinetics of the channel. KCNQ2/KCNQ3 are ubiquitinated by NEDD4L. Ubiquitination leads to protein degradation. Degradation induced by NEDD4L is inhibited by USP36. In terms of tissue distribution, predominantly expressed in brain.

The protein resides in the cell membrane. The catalysed reaction is K(+)(in) = K(+)(out). It catalyses the reaction Rb(+)(in) = Rb(+)(out). The enzyme catalyses Cs(+)(in) = Cs(+)(out). It carries out the reaction Na(+)(in) = Na(+)(out). With respect to regulation, phosphatidylinositol-4,5-bisphosphate (PIP2) potentiates the activation of KCNQ channels by enhancing the electro-mechanical coupling of the voltage-sensing domain (VSD) and the pore-forming domain (PD). In the closed state of the channel, PIP2 is anchored at the S2-S3 loop; upon channel activation, PIP2 interacts with the S4-S5 linker and is involved in channel gating. Calcium suppresses KCNQ2-KCNQ3 channel currents, with calcium-bound calmodulin inducing a change in channel configuration which leads to the reduction of channel affinity for PIP2 and subsequent current suppression. M-channel is activated by the anticonvulsant retigabine. In terms of biological role, pore-forming subunit of the voltage-gated potassium (Kv) M-channel which is responsible for the M-current, a key controller of neuronal excitability. M-channel is composed of pore-forming subunits KCNQ2 and KCNQ3 assembled as heterotetramers. The native M-current has a slowly activating and deactivating potassium conductance which plays a critical role in determining the subthreshold electrical excitability of neurons as well as the responsiveness to synaptic inputs. M-channel is selectively permeable in vitro to other cations besides potassium, in decreasing order of affinity K(+) &gt; Rb(+) &gt; Cs(+) &gt; Na(+). M-channel association with SLC5A3/SMIT1 alters channel ion selectivity, increasing Na(+) and Cs(+) permeation relative to K(+). Suppressed by activation of M1 muscarinic acetylcholine receptors. KCNQ3 also associates with KCNQ5 to form a functional channel in vitro and may also contribute to the M-current in brain. The chain is Potassium voltage-gated channel subfamily KQT member 3 from Homo sapiens (Human).